The following is a 265-amino-acid chain: ATP synthase subunit a (265 aa).

6 consecutive transmembrane segments (helical) span residues 26-46, 88-108, 132-152, 168-188, 195-217, and 231-251; these read VHLD…FFFY, IGSL…IDLI, DISA…FYTI, PFNH…TLLA, FRLF…MYMA, and LIWA…FMML.

The protein belongs to the ATPase A chain family. In terms of assembly, F-type ATPases have 2 components, CF(1) - the catalytic core - and CF(0) - the membrane proton channel. CF(1) has five subunits: alpha(3), beta(3), gamma(1), delta(1), epsilon(1). CF(0) has three main subunits: a(1), b(2) and c(9-12). The alpha and beta chains form an alternating ring which encloses part of the gamma chain. CF(1) is attached to CF(0) by a central stalk formed by the gamma and epsilon chains, while a peripheral stalk is formed by the delta and b chains.

Its subcellular location is the cell inner membrane. Functionally, key component of the proton channel; it plays a direct role in the translocation of protons across the membrane. This chain is ATP synthase subunit a, found in Histophilus somni (strain 2336) (Haemophilus somnus).